The sequence spans 407 residues: Arginine deiminase (407 aa).

The active-site Amidino-cysteine intermediate is the Cys-397.

The protein belongs to the arginine deiminase family.

It is found in the cytoplasm. It carries out the reaction L-arginine + H2O = L-citrulline + NH4(+). It participates in amino-acid degradation; L-arginine degradation via ADI pathway; carbamoyl phosphate from L-arginine: step 1/2. The sequence is that of Arginine deiminase from Limosilactobacillus fermentum (strain NBRC 3956 / LMG 18251) (Lactobacillus fermentum).